The chain runs to 356 residues: 5-formaminoimidazole-4-carboxamide-1-(beta)-D-ribofuranosyl 5'-monophosphate synthetase (356 aa).

Residues His-27 and Ser-94 each coordinate 5-amino-1-(5-phospho-beta-D-ribosyl)imidazole-4-carboxamide. Positions 101-333 (TENFADMAVP…YADLMEENLS (233 aa)) constitute an ATP-grasp domain. ATP is bound by residues 145–196 (PHDI…TRYY) and Glu-226. Asn-255 provides a ligand contact to 5-amino-1-(5-phospho-beta-D-ribosyl)imidazole-4-carboxamide. Mg(2+) contacts are provided by Glu-293 and Glu-306.

The protein belongs to the phosphohexose mutase family. Mg(2+) serves as cofactor. The cofactor is Mn(2+).

It catalyses the reaction 5-amino-1-(5-phospho-beta-D-ribosyl)imidazole-4-carboxamide + formate + ATP = 5-formamido-1-(5-phospho-D-ribosyl)imidazole-4-carboxamide + ADP + phosphate. Its pathway is purine metabolism; IMP biosynthesis via de novo pathway; 5-formamido-1-(5-phospho-D-ribosyl)imidazole-4-carboxamide from 5-amino-1-(5-phospho-D-ribosyl)imidazole-4-carboxamide (formate route): step 1/1. Catalyzes the ATP- and formate-dependent formylation of 5-aminoimidazole-4-carboxamide-1-beta-d-ribofuranosyl 5'-monophosphate (AICAR) to 5-formaminoimidazole-4-carboxamide-1-beta-d-ribofuranosyl 5'-monophosphate (FAICAR) in the absence of folates. The protein is 5-formaminoimidazole-4-carboxamide-1-(beta)-D-ribofuranosyl 5'-monophosphate synthetase of Methanosarcina barkeri (strain Fusaro / DSM 804).